Here is a 447-residue protein sequence, read N- to C-terminus: N-succinylarginine dihydrolase (447 aa).

Residues 19 to 28, Asn-110, and 137 to 138 contribute to the substrate site; these read AGLSFGNEAS and HR. The active site involves Glu-174. Arg-212 contacts substrate. His-248 is an active-site residue. Residues Asp-250 and Asn-359 each contribute to the substrate site. The active-site Nucleophile is Cys-365.

It belongs to the succinylarginine dihydrolase family. Homodimer.

It catalyses the reaction N(2)-succinyl-L-arginine + 2 H2O + 2 H(+) = N(2)-succinyl-L-ornithine + 2 NH4(+) + CO2. It functions in the pathway amino-acid degradation; L-arginine degradation via AST pathway; L-glutamate and succinate from L-arginine: step 2/5. Its function is as follows. Catalyzes the hydrolysis of N(2)-succinylarginine into N(2)-succinylornithine, ammonia and CO(2). The protein is N-succinylarginine dihydrolase of Escherichia coli (strain ATCC 8739 / DSM 1576 / NBRC 3972 / NCIMB 8545 / WDCM 00012 / Crooks).